Consider the following 148-residue polypeptide: MTITQVKIKKLENFSGSLPEYATEHSAGMDLIAANEQPITIKAGAIQLIPTGIAIALPDSFEAQIRPRSGLAVKHGITVANSPGTIDADYRGEIKVILINLGKEDFIIEKGMRIAQMIIAKYERILWEESSSLMETMRGSGGFGSTGV.

Residues 68–70, Asn81, 85–87, and Lys95 contribute to the substrate site; these read RSG and TID.

This sequence belongs to the dUTPase family. It depends on Mg(2+) as a cofactor.

The enzyme catalyses dUTP + H2O = dUMP + diphosphate + H(+). It functions in the pathway pyrimidine metabolism; dUMP biosynthesis; dUMP from dCTP (dUTP route): step 2/2. In terms of biological role, this enzyme is involved in nucleotide metabolism: it produces dUMP, the immediate precursor of thymidine nucleotides and it decreases the intracellular concentration of dUTP so that uracil cannot be incorporated into DNA. The chain is Deoxyuridine 5'-triphosphate nucleotidohydrolase from Rickettsia massiliae (strain Mtu5).